The chain runs to 167 residues: Endoribonuclease YbeY (167 aa).

Positions 131, 135, and 141 each coordinate Zn(2+).

This sequence belongs to the endoribonuclease YbeY family. It depends on Zn(2+) as a cofactor.

The protein localises to the cytoplasm. Its function is as follows. Single strand-specific metallo-endoribonuclease involved in late-stage 70S ribosome quality control and in maturation of the 3' terminus of the 16S rRNA. In Rickettsia akari (strain Hartford), this protein is Endoribonuclease YbeY.